The sequence spans 250 residues: MPNDNRLAPAALAAQAAALPAAWRHVLEQPAVARAFASVLGHVEQRLAEGAVVYPAAPFRALDQLAPADVRVVILGQDPYHGPGQAQGLAFSVPDDCKCPPSLRNIFNEIAVDYPRPTRHDLSAWTRQGVLLLNTSLTVEDGQPGSHAKRGWETVTDALIAEVARDPSPKVFLLWGAHAQAKQALVPADAGHLVLAANHPSPLSARRPPVPFVGCGHFRQTNAWLQQRGQKPVDWSGEQNNASRQGEFAL.

Aspartate 78 (proton acceptor) is an active-site residue. The interval 228 to 250 (RGQKPVDWSGEQNNASRQGEFAL) is disordered.

The protein belongs to the uracil-DNA glycosylase (UDG) superfamily. UNG family.

It localises to the cytoplasm. The catalysed reaction is Hydrolyzes single-stranded DNA or mismatched double-stranded DNA and polynucleotides, releasing free uracil.. Excises uracil residues from the DNA which can arise as a result of misincorporation of dUMP residues by DNA polymerase or due to deamination of cytosine. This Bordetella pertussis (strain Tohama I / ATCC BAA-589 / NCTC 13251) protein is Uracil-DNA glycosylase.